A 737-amino-acid chain; its full sequence is Dynein axonemal intermediate chain 7 homolog (737 aa).

Over residues 1 to 15 the composition is skewed to polar residues; the sequence is MPPKSPNRSGKSTPT. Disordered regions lie at residues 1-61, 274-362, and 410-452; these read MPPK…ERRA, KKVK…DDEE, and STVK…QQPP. Composition is skewed to basic and acidic residues over residues 18-61, 276-316, and 333-349; these read RPGE…ERRA, VKDE…EGRQ, and EETKKDENEGEKEDAVK. Polar residues-rich tracts occupy residues 417–429 and 441–451; these read DNPNTGRSSSRVA and PSKTPLEQQQP.

The protein belongs to the DNAI7 family.

The sequence is that of Dynein axonemal intermediate chain 7 homolog (AXP83.9) from Ciona intestinalis (Transparent sea squirt).